We begin with the raw amino-acid sequence, 481 residues long: Alpha-L-arabinofuranosidase 43 (481 aa).

The N-terminal stretch at 1-19 is a signal peptide; that stretch reads MRFSVFTAAIAAAFSACCA. N-linked (GlcNAc...) asparagine glycans are attached at residues Asn158, Asn176, and Asn365.

Belongs to the glycosyl hydrolase 43 family.

The protein resides in the secreted. The enzyme catalyses Hydrolysis of terminal non-reducing alpha-L-arabinofuranoside residues in alpha-L-arabinosides.. With respect to regulation, activity is significantly inhibited by SDS and partially inhibited by Ag(+), Fe(3+) and beta-mercaptoethanol. In terms of biological role, alpha-L-arabinofuranosidase specific for the cleavage of alpha-1,3-linkage. Shows high activity against 4-nitrophenyl alpha-L-arabinofuranoside, debranched arabinan, and sugar beet arabinan. The sequence is that of Alpha-L-arabinofuranosidase 43 from Humicola insolens (Soft-rot fungus).